A 286-amino-acid polypeptide reads, in one-letter code: 2-hydroxy-6-oxo-6-phenylhexa-2,4-dienoate hydrolase (286 aa).

Substrate contacts are provided by residues 42 to 43, asparagine 51, asparagine 111, serine 180, and arginine 190; that span reads GG. The active-site Proton acceptor is histidine 265. Tryptophan 266 lines the substrate pocket.

It belongs to the AB hydrolase superfamily. BphD family. As to quaternary structure, homodimer.

It catalyses the reaction 2,6-dioxo-6-phenylhexa-3-enoate + H2O = 2-oxopent-4-enoate + benzoate + H(+). The protein operates within xenobiotic degradation; biphenyl degradation; 2-hydroxy-2,4-pentadienoate and benzoate from biphenyl: step 4/4. Its activity is regulated as follows. Inhibited by 3-Cl HOPDA. Catalyzes an unusual C-C bond hydrolysis of 2-hydroxy-6-oxo-6-phenylhexa-2,4-dienoic acid (HOPDA) to produce benzoic acid and 2-hydroxy-2,4-pentadienoic acid (HPD). This chain is 2-hydroxy-6-oxo-6-phenylhexa-2,4-dienoate hydrolase (bphD), found in Paraburkholderia xenovorans (strain LB400).